We begin with the raw amino-acid sequence, 355 residues long: Peptide chain release factor 1 (355 aa).

Gln-233 carries the post-translational modification N5-methylglutamine.

The protein belongs to the prokaryotic/mitochondrial release factor family. In terms of processing, methylated by PrmC. Methylation increases the termination efficiency of RF1.

The protein resides in the cytoplasm. Functionally, peptide chain release factor 1 directs the termination of translation in response to the peptide chain termination codons UAG and UAA. In Bacillus cytotoxicus (strain DSM 22905 / CIP 110041 / 391-98 / NVH 391-98), this protein is Peptide chain release factor 1.